Here is a 265-residue protein sequence, read N- to C-terminus: tRNA (guanine-N(7)-)-methyltransferase (265 aa).

Residues 1–40 are disordered; the sequence is MIHDDDPNAPGAPHDDDATAAPASATRAAPAAGDDDDANP. Residues 19–32 are compositionally biased toward low complexity; sequence TAAPASATRAAPAA. Residues Glu95, Glu120, Asp147, and Asp170 each coordinate S-adenosyl-L-methionine. Asp170 is a catalytic residue. Substrate-binding positions include Lys174, Asp206, and 241–244; that span reads TKFE.

The protein belongs to the class I-like SAM-binding methyltransferase superfamily. TrmB family.

The catalysed reaction is guanosine(46) in tRNA + S-adenosyl-L-methionine = N(7)-methylguanosine(46) in tRNA + S-adenosyl-L-homocysteine. It functions in the pathway tRNA modification; N(7)-methylguanine-tRNA biosynthesis. Its function is as follows. Catalyzes the formation of N(7)-methylguanine at position 46 (m7G46) in tRNA. This Burkholderia pseudomallei (strain 1710b) protein is tRNA (guanine-N(7)-)-methyltransferase.